A 108-amino-acid polypeptide reads, in one-letter code: Inner membrane protein H108R (108 aa).

Residues 10–32 traverse the membrane as a helical segment; that stretch reads LIVIITILITTRELSTTMLIVSL. Positions 49 to 64 are enriched in polar residues; it reads ENNTFSMPQKNSFSES. The disordered stretch occupies residues 49–69; that stretch reads ENNTFSMPQKNSFSESYNKDK. A glycan (N-linked (GlcNAc...) asparagine; by host) is linked at N50.

This sequence belongs to the asfivirus H108R family.

It localises to the virion membrane. The protein is Inner membrane protein H108R of Ornithodoros (relapsing fever ticks).